Here is a 630-residue protein sequence, read N- to C-terminus: MMAALQTHKEYEKGTKKTFAPPTQKLHSEKPQPSSWKEDAPGTSSPEAETKPSLLKASLKKEQKPTTEHGPNRGQERKLKAQDQPAKKKGKERTLTSAEFEEIFQIVLQKSLQECLETSSCVQHIRPTKLDEEPGIVPPATDKKDADPEKVITPDTPKIASSLEEEVNSEMGTSKLGQPVTEPSKKKFNRLSLSKQKKKAEDEKMEKIQDGRECSLKEKQKIVIQDQSQIRGPQKEEESGFGHCVIWVQCSSPKCEKWRQLRGNIDPSVLPDDWSCDQNPDPNYNRCDIPEESWAGCESDVAYASYVPGSIIWAKQYGYPWWPGMIEADPDLGEYFLFASHLDSLPSKYHVTFFGETVSRAWIPVRMLKNFQELSLELVKKCKNKNSNQKLEAAIAMAHRAEQTSIQERVNLFGFWSRYNGADISEEGEDLTLCESNNPESCLEKEEKDLEEEKEEEEEKKDPTLPRPKPAKMQTKKPKSRGPAGGPDGTPKKKTAKKSLVSESTVPPVPTLGGKEEQGNSDLDHPVPKKKFKAPENKTSATNLSEEKEIKIVSKCPTPSAQHGACPLGKEGLVPHMPPTQEAASFPPDDDCSSDLDLEQLMEDIGEPEERGEMQQRGSSEEFLAALFEE.

2 disordered regions span residues 1–99 and 130–184; these read MMAA…TSAE and LDEE…TEPS. Composition is skewed to basic and acidic residues over residues 26–40, 59–81, and 141–152; these read LHSE…KEDA, LKKE…KLKA, and TDKKDADPEKVI. Residues 241-295 form a CW-type zinc finger; sequence FGHCVIWVQCSSPKCEKWRQLRGNIDPSVLPDDWSCDQNPDPNYNRCDIPEESWA. Cys-250, Cys-255, Cys-276, and Cys-287 together coordinate Zn(2+). Residues 308-374 form the PWWP domain; it reads PGSIIWAKQY…VRMLKNFQEL (67 aa). The disordered stretch occupies residues 430–595; that stretch reads DLTLCESNNP…FPPDDDCSSD (166 aa). Residues 435–465 are a coiled coil; that stretch reads ESNNPESCLEKEEKDLEEEKEEEEEKKDPTL. The segment covering 449–459 has biased composition (acidic residues); the sequence is DLEEEKEEEEE. A compositionally biased stretch (basic and acidic residues) spans 514 to 527; the sequence is GKEEQGNSDLDHPV. Ser-619 is subject to Phosphoserine.

Testis (at protein level). Expressed in thymus, brain, lung, ovary, oviduct and uterus.

It is found in the nucleus. Its subcellular location is the chromosome. Functionally, dual histone methylation reader specific for PRDM9-catalyzed histone marks (H3K4me3 and H3K36me3) that facilitates the repair of PRDM9-induced meiotic double-strand breaks (DSBs). Essential for male fertility and spermatogenesis. Required for meiosis prophase I progression in male but not in female germ cells. The sequence is that of Zinc finger CW-type PWWP domain protein 1 (Zcwpw1) from Mus musculus (Mouse).